Here is a 436-residue protein sequence, read N- to C-terminus: Methylenetetrahydrofolate--tRNA-(uracil-5-)-methyltransferase TrmFO (436 aa).

Position 7–12 (7–12 (GAGLAG)) interacts with FAD.

Belongs to the MnmG family. TrmFO subfamily. FAD serves as cofactor.

It localises to the cytoplasm. It carries out the reaction uridine(54) in tRNA + (6R)-5,10-methylene-5,6,7,8-tetrahydrofolate + NADH + H(+) = 5-methyluridine(54) in tRNA + (6S)-5,6,7,8-tetrahydrofolate + NAD(+). It catalyses the reaction uridine(54) in tRNA + (6R)-5,10-methylene-5,6,7,8-tetrahydrofolate + NADPH + H(+) = 5-methyluridine(54) in tRNA + (6S)-5,6,7,8-tetrahydrofolate + NADP(+). Functionally, catalyzes the folate-dependent formation of 5-methyl-uridine at position 54 (M-5-U54) in all tRNAs. The sequence is that of Methylenetetrahydrofolate--tRNA-(uracil-5-)-methyltransferase TrmFO from Caldicellulosiruptor bescii (strain ATCC BAA-1888 / DSM 6725 / KCTC 15123 / Z-1320) (Anaerocellum thermophilum).